Reading from the N-terminus, the 240-residue chain is BLOC-1-related complex subunit 8 homolog (240 aa).

Disordered regions lie at residues 1 to 33 (MSSI…GSHG) and 163 to 240 (KTFS…EKIN). 2 stretches are compositionally biased toward low complexity: residues 7 to 26 (SSTG…NNIS) and 163 to 179 (KTFS…QQQQ). Positions 180-190 (TNLTPSKPTLS) are enriched in polar residues. Residues 196–205 (DNNNNNNNLN) show a composition bias toward low complexity. Basic and acidic residues predominate over residues 208-240 (EKIEKEEKIEKEDEGKEKDEKEKDDKDLNEKIN). Residues 211 to 239 (EKEEKIEKEDEGKEKDEKEKDDKDLNEKI) adopt a coiled-coil conformation.

Belongs to the BORCS8 family.

The protein resides in the lysosome membrane. In terms of biological role, may participate in the coupling of lysosomes to microtubule plus-end-directed kinesin motor. The protein is BLOC-1-related complex subunit 8 homolog of Dictyostelium discoideum (Social amoeba).